The sequence spans 279 residues: uncharacterized protein (279 aa).

The protein belongs to the peptidase C59 family.

This is an uncharacterized protein from Chlorella (PBCV-1).